Reading from the N-terminus, the 305-residue chain is Peroxidase A2 (305 aa).

Q1 bears the Pyrrolidone carboxylic acid mark. Residues N3 and N13 are each glycosylated (N-linked (GlcNAc...) asparagine). Disulfide bonds link C11–C91, C44–C49, C97–C299, and C176–C208. H42 functions as the Proton acceptor in the catalytic mechanism. 5 residues coordinate Ca(2+): D43, V46, G48, D50, and S52. P139 contacts substrate. N147 carries N-linked (GlcNAc...) asparagine glycosylation. A heme b-binding site is contributed by H169. Residue T170 participates in Ca(2+) binding. Residues N185, N197, and N211 are each glycosylated (N-linked (GlcNAc...) asparagine). Ca(2+) contacts are provided by D221, T224, and D229. N-linked (GlcNAc...) asparagine glycosylation is present at N267.

The protein belongs to the peroxidase family. Classical plant (class III) peroxidase subfamily. The cofactor is Ca(2+). It depends on heme b as a cofactor.

The enzyme catalyses 2 a phenolic donor + H2O2 = 2 a phenolic radical donor + 2 H2O. Removal of H(2)O(2), oxidation of toxic reductants, biosynthesis and degradation of lignin, suberization, auxin catabolism, response to environmental stresses such as wounding, pathogen attack and oxidative stress. These functions might be dependent on each isozyme/isoform in each plant tissue. This is Peroxidase A2 (HRPA2) from Armoracia rusticana (Horseradish).